Reading from the N-terminus, the 205-residue chain is Ras-related protein RABD1 (205 aa).

Ser2 carries the post-translational modification N-acetylserine. GTP is bound by residues 15–23 (GDSSVGKSC), 33–40 (YIDSYIST), 63–67 (DTAGQ), 121–124 (NKND), and 151–153 (SAK). The Effector region signature appears at 37-45 (YISTIGVDF). Polar residues-rich tracts occupy residues 174-186 (GSQT…SGPG) and 194-205 (PIQQNNGGCCGQ). The segment at 174–205 (GSQTNANKTSGPGTVQMKGQPIQQNNGGCCGQ) is disordered. S-geranylgeranyl cysteine attachment occurs at residues Cys202 and Cys203.

Belongs to the small GTPase superfamily. Rab family. Does not interact with GC5. Interacts with XI-2/MYA2.

Its subcellular location is the golgi apparatus. The protein localises to the trans-Golgi network membrane. It localises to the golgi apparatus membrane. Its function is as follows. Protein transport. Regulator of membrane traffic from the Golgi apparatus towards the endoplasmic reticulum (ER). The polypeptide is Ras-related protein RABD1 (RABD1) (Arabidopsis thaliana (Mouse-ear cress)).